A 151-amino-acid chain; its full sequence is Large ribosomal subunit protein uL22 (151 aa).

The span at Met-1–Ala-18 shows a compositional bias: polar residues. Positions Met-1–Leu-23 are disordered.

The protein belongs to the universal ribosomal protein uL22 family. Part of the 50S ribosomal subunit.

This protein binds specifically to 23S rRNA. It makes multiple contacts with different domains of the 23S rRNA in the assembled 50S subunit and ribosome. In terms of biological role, the globular domain of the protein is located near the polypeptide exit tunnel on the outside of the subunit, while an extended beta-hairpin is found that lines the wall of the exit tunnel in the center of the 70S ribosome. This chain is Large ribosomal subunit protein uL22, found in Methanosarcina mazei (strain ATCC BAA-159 / DSM 3647 / Goe1 / Go1 / JCM 11833 / OCM 88) (Methanosarcina frisia).